A 356-amino-acid polypeptide reads, in one-letter code: Glucose-1-phosphate thymidylyltransferase (356 aa).

Mg(2+) is bound by residues aspartate 107 and aspartate 221.

Belongs to the glucose-1-phosphate thymidylyltransferase family. It depends on Mg(2+) as a cofactor.

The enzyme catalyses dTTP + alpha-D-glucose 1-phosphate + H(+) = dTDP-alpha-D-glucose + diphosphate. It participates in antibiotic biosynthesis. Involved in the biosynthesis of the two 2,6-deoxysugars, dTDP-L-oleandrose and dTDP-D-desosamine, attached to the macrolactone ring oleandolide to produce the aglycone antibiotic oleandomycin. Catalyzes the formation of dTDP-glucose from deoxythymidine triphosphate (dTTP) and glucose 1-phosphate. This chain is Glucose-1-phosphate thymidylyltransferase, found in Streptomyces antibioticus.